The sequence spans 869 residues: Synaptonemal complex protein ZEP1 (869 aa).

3 coiled-coil regions span residues 64–298 (TDLE…SGFT), 330–614 (HEEK…SERY), and 641–713 (RAYH…WKVM). The disordered stretch occupies residues 841–869 (GSHPHPANIGELFSEGSLNPYAEDPYAFG).

In terms of assembly, interacts with CRC1. Highly expressed in panicles.

The protein resides in the nucleus. The protein localises to the chromosome. Required for chromosome synapsis and regulates crossover frequency during meiosis. Acts as a transverse filament protein and constitutes the central element of the synaptonemal complex. This is Synaptonemal complex protein ZEP1 (ZEP1) from Oryza sativa subsp. japonica (Rice).